Reading from the N-terminus, the 892-residue chain is DNA mismatch repair protein MutS (892 aa).

Residue 634–641 coordinates ATP; it reads GPNMGGKS.

The protein belongs to the DNA mismatch repair MutS family.

This protein is involved in the repair of mismatches in DNA. It is possible that it carries out the mismatch recognition step. This protein has a weak ATPase activity. In Paraburkholderia phymatum (strain DSM 17167 / CIP 108236 / LMG 21445 / STM815) (Burkholderia phymatum), this protein is DNA mismatch repair protein MutS.